The primary structure comprises 102 residues: Large ribosomal subunit protein bL21 (102 aa).

Belongs to the bacterial ribosomal protein bL21 family. As to quaternary structure, part of the 50S ribosomal subunit. Contacts protein L20.

Its function is as follows. This protein binds to 23S rRNA in the presence of protein L20. In Pelobacter propionicus (strain DSM 2379 / NBRC 103807 / OttBd1), this protein is Large ribosomal subunit protein bL21.